The following is a 549-amino-acid chain: Polynucleotide 5'-hydroxyl-kinase nol-9 (549 aa).

190 to 197 (GHKGAGKS) lines the ATP pocket.

The protein belongs to the Clp1 family. NOL9/GRC3 subfamily.

Its subcellular location is the nucleus. It is found in the nucleolus. Its function is as follows. Polynucleotide 5'-kinase involved in rRNA processing. The protein is Polynucleotide 5'-hydroxyl-kinase nol-9 (nol-9) of Caenorhabditis elegans.